Here is a 322-residue protein sequence, read N- to C-terminus: Probable cell division protein WhiA (322 aa).

The segment at residues 279–312 is a DNA-binding region (H-T-H motif); the sequence is SLKELGELWTPPVGKSGVNHRIRKIERLAEKLRS.

Belongs to the WhiA family.

Functionally, involved in cell division and chromosome segregation. The chain is Probable cell division protein WhiA from Desulforamulus reducens (strain ATCC BAA-1160 / DSM 100696 / MI-1) (Desulfotomaculum reducens).